Consider the following 154-residue polypeptide: Prefoldin subunit 5 (154 aa).

Residue Ala-2 is modified to N-acetylalanine. Residue Lys-42 is modified to N6-acetyllysine. Ser-56 carries the phosphoserine modification.

This sequence belongs to the prefoldin subunit alpha family. In terms of assembly, heterohexamer of two PFD-alpha type and four PFD-beta type subunits.

It localises to the nucleus. In terms of biological role, binds specifically to cytosolic chaperonin (c-CPN) and transfers target proteins to it. Binds to nascent polypeptide chain and promotes folding in an environment in which there are many competing pathways for nonnative proteins. Represses the transcriptional activity of MYC. The sequence is that of Prefoldin subunit 5 (Pfdn5) from Mus musculus (Mouse).